The primary structure comprises 147 residues: UPF0275 protein PM0504 (147 aa).

This sequence belongs to the UPF0275 family.

This chain is UPF0275 protein PM0504, found in Pasteurella multocida (strain Pm70).